Here is a 674-residue protein sequence, read N- to C-terminus: Dymeclin (674 aa).

Glycine 2 carries the N-myristoyl glycine lipid modification.

The protein belongs to the dymeclin family. Interacts with GOLM1 and PPIB. Post-translationally, myristoylated in vitro; myristoylation is not essential for protein targeting to Golgi compartment.

Its subcellular location is the cytoplasm. The protein localises to the golgi apparatus. It is found in the membrane. Functionally, necessary for correct organization of Golgi apparatus. Involved in bone development. The polypeptide is Dymeclin (Dym) (Rattus norvegicus (Rat)).